Here is a 172-residue protein sequence, read N- to C-terminus: Adenylate kinase isoenzyme 6 (172 aa).

The ATP site is built by G13, G15, K16, T17, and T18. The segment at 33 to 56 is NMPbind; that stretch reads NVGDLAREGQLYDGYDEEYDCPIL. Positions 108–118 are LID; that stretch reads NRGYNEKKLKD. 2 residues coordinate ATP: R109 and K148.

This sequence belongs to the adenylate kinase family. AK6 subfamily. Monomer and homodimer. Interacts with small ribosomal subunit protein uS11. Not a structural component of 43S pre-ribosomes, but transiently interacts with them by binding to uS11. Interacts with COIL (via C-terminus).

It localises to the cytoplasm. The protein resides in the nucleus. The protein localises to the nucleoplasm. It is found in the cajal body. It catalyses the reaction AMP + ATP = 2 ADP. The catalysed reaction is ATP + H2O = ADP + phosphate + H(+). Broad-specificity nucleoside monophosphate (NMP) kinase that catalyzes the reversible transfer of the terminal phosphate group between nucleoside triphosphates and monophosphates. Also has ATPase activity. Involved in the late cytoplasmic maturation steps of the 40S ribosomal particles, specifically 18S rRNA maturation. While NMP activity is not required for ribosome maturation, ATPase activity is. Associates transiently with small ribosomal subunit protein uS11. ATP hydrolysis breaks the interaction with uS11. May temporarily remove uS11 from the ribosome to enable a conformational change of the ribosomal RNA that is needed for the final maturation step of the small ribosomal subunit. Its NMP activity may have a role in nuclear energy homeostasis. May be involved in regulation of Cajal body (CB) formation. This is Adenylate kinase isoenzyme 6 from Bos taurus (Bovine).